Consider the following 203-residue polypeptide: Nucleoside triphosphate pyrophosphatase (203 aa).

Asp77 acts as the Proton acceptor in catalysis.

It belongs to the Maf family. It depends on a divalent metal cation as a cofactor.

It localises to the cytoplasm. The catalysed reaction is a ribonucleoside 5'-triphosphate + H2O = a ribonucleoside 5'-phosphate + diphosphate + H(+). It catalyses the reaction a 2'-deoxyribonucleoside 5'-triphosphate + H2O = a 2'-deoxyribonucleoside 5'-phosphate + diphosphate + H(+). In terms of biological role, nucleoside triphosphate pyrophosphatase. May have a dual role in cell division arrest and in preventing the incorporation of modified nucleotides into cellular nucleic acids. This chain is Nucleoside triphosphate pyrophosphatase, found in Rickettsia felis (strain ATCC VR-1525 / URRWXCal2) (Rickettsia azadi).